The chain runs to 85 residues: UPF0297 protein CHY_0540 (85 aa).

The protein belongs to the UPF0297 family.

This is UPF0297 protein CHY_0540 from Carboxydothermus hydrogenoformans (strain ATCC BAA-161 / DSM 6008 / Z-2901).